A 134-amino-acid polypeptide reads, in one-letter code: U-scoloptoxin(05)-Er2a (134 aa).

The first 19 residues, 1–19 (MTFVVAAVVLLTVVPLATP), serve as a signal peptide directing secretion.

The protein belongs to the scoloptoxin-05 family. Contains 5 disulfide bonds. Expressed by the venom gland.

Its subcellular location is the secreted. This Ethmostigmus rubripes (Giant centipede) protein is U-scoloptoxin(05)-Er2a.